The primary structure comprises 171 residues: Co-chaperone protein HscB (171 aa).

A J domain is found at 2 to 74 (DYFTFFGLPA…LMRAEYLLSL (73 aa)).

The protein belongs to the HscB family. In terms of assembly, interacts with HscA and stimulates its ATPase activity. Interacts with IscU.

Its function is as follows. Co-chaperone involved in the maturation of iron-sulfur cluster-containing proteins. Seems to help targeting proteins to be folded toward HscA. The sequence is that of Co-chaperone protein HscB from Shigella sonnei (strain Ss046).